A 307-amino-acid polypeptide reads, in one-letter code: Aspartate carbamoyltransferase catalytic subunit (307 aa).

Carbamoyl phosphate-binding residues include Arg59 and Thr60. Lys87 serves as a coordination point for L-aspartate. The carbamoyl phosphate site is built by Arg109, His137, and Gln140. Residues Arg173 and Arg223 each coordinate L-aspartate. 2 residues coordinate carbamoyl phosphate: Gly266 and Pro267.

It belongs to the aspartate/ornithine carbamoyltransferase superfamily. ATCase family. Heterododecamer (2C3:3R2) of six catalytic PyrB chains organized as two trimers (C3), and six regulatory PyrI chains organized as three dimers (R2).

It carries out the reaction carbamoyl phosphate + L-aspartate = N-carbamoyl-L-aspartate + phosphate + H(+). It functions in the pathway pyrimidine metabolism; UMP biosynthesis via de novo pathway; (S)-dihydroorotate from bicarbonate: step 2/3. Functionally, catalyzes the condensation of carbamoyl phosphate and aspartate to form carbamoyl aspartate and inorganic phosphate, the committed step in the de novo pyrimidine nucleotide biosynthesis pathway. The protein is Aspartate carbamoyltransferase catalytic subunit of Helicobacter pylori (strain HPAG1).